The sequence spans 293 residues: ATP synthase gamma chain (293 aa).

This sequence belongs to the ATPase gamma chain family. F-type ATPases have 2 components, CF(1) - the catalytic core - and CF(0) - the membrane proton channel. CF(1) has five subunits: alpha(3), beta(3), gamma(1), delta(1), epsilon(1). CF(0) has three main subunits: a, b and c.

The protein resides in the cell inner membrane. Its function is as follows. Produces ATP from ADP in the presence of a proton gradient across the membrane. The gamma chain is believed to be important in regulating ATPase activity and the flow of protons through the CF(0) complex. The protein is ATP synthase gamma chain of Chlorobium chlorochromatii (strain CaD3).